Consider the following 393-residue polypeptide: Short chain dehydrogenase sirQ (393 aa).

Leu-54 is a binding site for NADP(+). Ser-233 acts as the Proton donor in catalysis. The Lowers pKa of active site Tyr role is filled by Lys-259. Ala-286 provides a ligand contact to NADP(+).

It belongs to the short-chain dehydrogenases/reductases (SDR) family. Highly divergent.

Its pathway is mycotoxin biosynthesis. Short chain dehydrogenase; part of the gene cluster that mediates the biosynthesis of sirodesmin PL, an epipolythiodioxopiperazine (ETP) characterized by a disulfide bridged cyclic dipeptide and that acts as a phytotoxin which is involved in the blackleg didease of canola. SirD catalyzes the O-prenylation of L-tyrosine (L-Tyr) in the presence of dimethylallyl diphosphate (DMAPP) to yield 4-O-dimethylallyl-L-Tyr, and therefore represents probably the first pathway-specific enzyme in the biosynthesis of sirodesmin PL. 4-O-dimethylallyl-L-Tyr, then undergoes condensation with L-Ser in a reaction catalyzed by the non-ribosomal peptide synthase sirP to form the diketopiperazine (DKP) backbone. Further bishydroxylation of the DKP performed by the cytochrome P450 monooxygenase sirC leads to the production of the intermediate phomamide. This step is essential to form the reactive thiol group required for toxicity of sirodesmin PL. The next steps of sirodesmin biosynthesis are not well understood yet, but some predictions could be made from intermediate compounds identification. Phomamide is converted into phomalizarine via oxidation, probably by sirT. Further oxidation, methylation (by sirM or sirN) and reduction steps convert phomalizarine to deacetyl sirodesmin. Finally, acetyltransferase sirH probably acetylates deacetyl sirodesmin to produce sirodesmin PL. This is Short chain dehydrogenase sirQ from Leptosphaeria maculans (Blackleg fungus).